The chain runs to 192 residues: UPF0312 protein PFLU_5725 (192 aa).

An N-terminal signal peptide occupies residues 1–23 (MLKKTLAALAIGTALLSAGQVMA).

It belongs to the UPF0312 family. Type 1 subfamily.

The protein localises to the periplasm. The chain is UPF0312 protein PFLU_5725 from Pseudomonas fluorescens (strain SBW25).